A 544-amino-acid polypeptide reads, in one-letter code: Chaperonin GroEL 1 (544 aa).

ATP contacts are provided by residues 29–32 (TLGP), 86–90 (DGTTT), Gly413, 482–484 (NVL), and Asp498.

This sequence belongs to the chaperonin (HSP60) family. As to quaternary structure, forms a cylinder of 14 subunits composed of two heptameric rings stacked back-to-back. Interacts with the co-chaperonin GroES.

Its subcellular location is the cytoplasm. It carries out the reaction ATP + H2O + a folded polypeptide = ADP + phosphate + an unfolded polypeptide.. Functionally, together with its co-chaperonin GroES, plays an essential role in assisting protein folding. The GroEL-GroES system forms a nano-cage that allows encapsulation of the non-native substrate proteins and provides a physical environment optimized to promote and accelerate protein folding. In Chloroflexus aurantiacus (strain ATCC 29366 / DSM 635 / J-10-fl), this protein is Chaperonin GroEL 1.